A 365-amino-acid chain; its full sequence is Metallophosphoesterase 1 homolog (365 aa).

A helical transmembrane segment spans residues 10 to 30 (PILLAIILVVYNEYFIFFIAF). 6 residues coordinate a divalent metal cation: D54, D96, N132, H208, H262, and H264. Residues 319–339 (ILQIMVYIFGGIGIVILAFIL) form a helical membrane-spanning segment.

It belongs to the metallophosphoesterase superfamily. MPPE1 family. Requires Mn(2+) as cofactor.

Its subcellular location is the endoplasmic reticulum-Golgi intermediate compartment membrane. It localises to the golgi apparatus. The protein resides in the cis-Golgi network membrane. Metallophosphoesterase required for transport of GPI-anchor proteins from the endoplasmic reticulum to the Golgi. Acts in lipid remodeling steps of GPI-anchor maturation by mediating the removal of a side-chain ethanolamine-phosphate (EtNP) from the second Man (Man2) of the GPI intermediate, an essential step for efficient transport of GPI-anchor proteins. The sequence is that of Metallophosphoesterase 1 homolog from Caenorhabditis elegans.